Here is a 531-residue protein sequence, read N- to C-terminus: Ultra-long-chain fatty acid omega-hydroxylase (531 aa).

Residues 1–22 (MLPITDRLLHLLGLEKTAFRIY) lie on the Lumenal side of the membrane. A helical transmembrane segment spans residues 23 to 43 (AVSTLLLFLLFFLFRLLLRFL). Over 44–531 (RLCRSFYITC…LKVEPLPPRA (488 aa)) the chain is Cytoplasmic. Heme contacts are provided by E335 and C475.

It belongs to the cytochrome P450 family. Requires heme as cofactor.

Its subcellular location is the endoplasmic reticulum membrane. It localises to the microsome membrane. The catalysed reaction is triacontanoate + reduced [NADPH--hemoprotein reductase] + O2 = omega-hydroxy-triacontanoate + oxidized [NADPH--hemoprotein reductase] + H2O + H(+). It carries out the reaction an omega-methyl-ultra-long-chain fatty acid + reduced [NADPH--hemoprotein reductase] + O2 = an omega-hydroxy-ultra-long-chain fatty acid + oxidized [NADPH--hemoprotein reductase] + H2O + H(+). Functionally, a cytochrome P450 monooxygenase involved in epidermal ceramide biosynthesis. Hydroxylates the terminal carbon (omega-hydroxylation) of ultra-long-chain fatty acyls (C28-C36) prior to ceramide synthesis. Contributes to the synthesis of three classes of omega-hydroxy-ultra-long chain fatty acylceramides having sphingosine, 6-hydroxysphingosine and phytosphingosine bases, all major lipid components that underlie the permeability barrier of the stratum corneum. Mechanistically, uses molecular oxygen inserting one oxygen atom into a substrate, and reducing the second into a water molecule, with two electrons provided by NADPH via cytochrome P450 reductase (CPR; NADPH-ferrihemoprotein reductase). The protein is Ultra-long-chain fatty acid omega-hydroxylase of Homo sapiens (Human).